Here is a 77-residue protein sequence, read N- to C-terminus: Acyl carrier protein (77 aa).

Positions 2–77 (SDIADRVKKI…DAVKFISDAS (76 aa)) constitute a Carrier domain. S37 carries the O-(pantetheine 4'-phosphoryl)serine modification.

It belongs to the acyl carrier protein (ACP) family. In terms of processing, 4'-phosphopantetheine is transferred from CoA to a specific serine of apo-ACP by AcpS. This modification is essential for activity because fatty acids are bound in thioester linkage to the sulfhydryl of the prosthetic group.

It localises to the cytoplasm. It functions in the pathway lipid metabolism; fatty acid biosynthesis. Its function is as follows. Carrier of the growing fatty acid chain in fatty acid biosynthesis. The sequence is that of Acyl carrier protein from Roseobacter denitrificans (strain ATCC 33942 / OCh 114) (Erythrobacter sp. (strain OCh 114)).